The primary structure comprises 87 residues: U3-theraphotoxin-Hhn1a 3 (87 aa).

A signal peptide spans 1-24 (MVNMKASMFLTFAGLVLLFVVCYA). Positions 25-52 (PESEEKEFPKEMLSSIFAVDNDFKQEER) are excised as a propeptide. Cystine bridges form between C54–C67, C61–C72, and C66–C79.

This sequence belongs to the neurotoxin 10 (Hwtx-1) family. 51 (Hntx-8) subfamily. Hntx-8 sub-subfamily. As to expression, expressed by the venom gland.

It is found in the secreted. Its function is as follows. Ion channel inhibitor. This Cyriopagopus hainanus (Chinese bird spider) protein is U3-theraphotoxin-Hhn1a 3.